We begin with the raw amino-acid sequence, 295 residues long: Protease HtpX homolog (295 aa).

A run of 2 helical transmembrane segments spans residues 6–26 (IGLFLLTNILVVVTISIVTSV) and 40–60 (LSSLVIFCFLWGMGGAFVSLL). His148 is a Zn(2+) binding site. Glu149 is a catalytic residue. Residue His152 coordinates Zn(2+). Transmembrane regions (helical) follow at residues 163–183 (LIQGIVNAFVMFFSRIISYAL) and 198–218 (ISNIVLSILFSILGSIVVAYF). Zn(2+) is bound at residue Glu223.

Belongs to the peptidase M48B family. Requires Zn(2+) as cofactor.

It localises to the cell inner membrane. This Leptospira borgpetersenii serovar Hardjo-bovis (strain JB197) protein is Protease HtpX homolog.